A 209-amino-acid chain; its full sequence is CASP-like protein 1A1 (209 aa).

A disordered region spans residues 1–26 (MEEAKHNEAEEAQGIEAREAKQIEAG). Topologically, residues 1–49 (MEEAKHNEAEEAQGIEAREAKQIEAGETSRSSRKLITFEPKLVINKGIS) are cytoplasmic. A helical transmembrane segment spans residues 50–70 (VLGFVLRLFAVFGTIGSALAM). Over 71–95 (GTTHESVVSLSQLVLLKVKYSDLPT) the chain is Extracellular. A helical transmembrane segment spans residues 96–116 (LMFFVVANAISGGYLVLSLPV). Topologically, residues 117-130 (SIFHIFSTQAKTSR) are cytoplasmic. A helical transmembrane segment spans residues 131 to 151 (IILLVVDTVMLALVSSGASAA). Residues 152–183 (TATVYLAHEGNTTANWPPICQQFDGFCERISG) are Extracellular-facing. The N-linked (GlcNAc...) asparagine glycan is linked to Asn-162. Residues 184–204 (SLIGSFCAVILLMLIVINSAI) form a helical membrane-spanning segment. Residues 205–209 (SLSRH) lie on the Cytoplasmic side of the membrane.

The protein belongs to the Casparian strip membrane proteins (CASP) family. Homodimer and heterodimers. Expressed in the root endodermis.

The protein localises to the cell membrane. The sequence is that of CASP-like protein 1A1 from Arabidopsis thaliana (Mouse-ear cress).